Here is a 292-residue protein sequence, read N- to C-terminus: AKT-interacting protein (292 aa).

Polar residues predominate over residues 1 to 11; the sequence is MNPFWSMSTSS. The interval 1–63 is disordered; it reads MNPFWSMSTS…TSPAPAAQST (63 aa). Residues 14–23 are compositionally biased toward basic and acidic residues; that stretch reads KRSEGEEKTL. Ser-30 carries the phosphoserine modification. In terms of domain architecture, UBC core spans 74 to 222; it reads YLEYSLLAEF…VVDSVKVCTA (149 aa).

Belongs to the ubiquitin-conjugating enzyme family. FTS subfamily. In terms of assembly, component of the FTS/Hook/FHIP complex (FHF complex), composed of AKTIP/FTS, FHIP1B, and one or more members of the Hook family of proteins HOOK1, HOOK2, and HOOK3. Interacts directly with HOOK1, HOOK2 and HOOK3. The FHF complex associates with the homotypic vesicular sorting complex (the HOPS complex). Also interacts with AKT1. May interact with FHIP1A.

Its subcellular location is the cytoplasm. The protein localises to the cell membrane. Component of the FTS/Hook/FHIP complex (FHF complex). The FHF complex may function to promote vesicle trafficking and/or fusion via the homotypic vesicular protein sorting complex (the HOPS complex). Regulates apoptosis by enhancing phosphorylation and activation of AKT1. Increases release of TNFSF6 via the AKT1/GSK3B/NFATC1 signaling cascade. FHF complex promotes the distribution of AP-4 complex to the perinuclear area of the cell. The sequence is that of AKT-interacting protein from Homo sapiens (Human).